Consider the following 170-residue polypeptide: Photosystem II extrinsic protein V (170 aa).

Positions 1 to 33 are cleaved as a signal peptide; the sequence is MASLFASLGRSLIKLLIVLPVIIGLSISSPAMA. Heme c-binding residues include cysteine 70, cysteine 73, histidine 74, and histidine 125.

The protein belongs to the cytochrome c family. PsbV subfamily. As to quaternary structure, PSII is composed of 1 copy each of membrane proteins PsbA, PsbB, PsbC, PsbD, PsbE, PsbF, PsbH, PsbI, PsbJ, PsbK, PsbL, PsbM, PsbT, PsbX, PsbY, Psb30/Ycf12, peripheral proteins PsbO, CyanoQ (PsbQ), PsbU, PsbV and a large number of cofactors. It forms dimeric complexes. The cofactor is heme c.

It is found in the cellular thylakoid membrane. Functionally, one of the extrinsic, lumenal subunits of photosystem II (PSII). PSII is a light-driven water plastoquinone oxidoreductase, using light energy to abstract electrons from H(2)O, generating a proton gradient subsequently used for ATP formation. The extrinsic proteins stabilize the structure of photosystem II oxygen-evolving complex (OEC), the ion environment of oxygen evolution and protect the OEC against heat-induced inactivation. Low-potential cytochrome c that plays a role in the OEC of PSII. This Prochlorococcus marinus (strain MIT 9313) protein is Photosystem II extrinsic protein V.